A 152-amino-acid polypeptide reads, in one-letter code: Nucleoside diphosphate kinase (152 aa).

Residues Lys-11, Phe-59, Arg-87, Thr-93, Arg-104, and Asn-114 each coordinate ATP. The active-site Pros-phosphohistidine intermediate is the His-117.

The protein belongs to the NDK family. Homotetramer. The cofactor is Mg(2+).

The protein localises to the cytoplasm. The catalysed reaction is dZDP + ATP = dZTP + ADP. It catalyses the reaction a 2'-deoxyribonucleoside 5'-diphosphate + ATP = a 2'-deoxyribonucleoside 5'-triphosphate + ADP. The enzyme catalyses a ribonucleoside 5'-diphosphate + ATP = a ribonucleoside 5'-triphosphate + ADP. The protein operates within purine metabolism. Major role in the synthesis of nucleoside triphosphates other than ATP. The ATP gamma phosphate is transferred to the NDP beta phosphate via a ping-pong mechanism, using a phosphorylated active-site intermediate. Functionally, (Microbial infection) Catalyzes the phosphorylation of dZDP to dZTP, when the bacterium is infected by a phage that produces the substrate for the synthesis of dZTP (2- amino-2'-deoxyadenosine 5'-triphosphate), which is then used by the phage as a DNA polymerase substrate. This Synechococcus sp. (strain WH7803) protein is Nucleoside diphosphate kinase.